Here is a 130-residue protein sequence, read N- to C-terminus: DNA-directed RNA polymerase subunit omega (130 aa).

2 disordered regions span residues 79-98 (EPEPDTVPLIGSAGASVDAD) and 109-130 (EEELLKGLEGLAPPEEQPEEDE).

This sequence belongs to the RNA polymerase subunit omega family. As to quaternary structure, the RNAP catalytic core consists of 2 alpha, 1 beta, 1 beta' and 1 omega subunit. When a sigma factor is associated with the core the holoenzyme is formed, which can initiate transcription.

The enzyme catalyses RNA(n) + a ribonucleoside 5'-triphosphate = RNA(n+1) + diphosphate. In terms of biological role, promotes RNA polymerase assembly. Latches the N- and C-terminal regions of the beta' subunit thereby facilitating its interaction with the beta and alpha subunits. This chain is DNA-directed RNA polymerase subunit omega (rpoZ), found in Bradyrhizobium diazoefficiens (strain JCM 10833 / BCRC 13528 / IAM 13628 / NBRC 14792 / USDA 110).